Here is a 151-residue protein sequence, read N- to C-terminus: Large ribosomal subunit protein uL30 (151 aa).

This sequence belongs to the universal ribosomal protein uL30 family. As to quaternary structure, part of the 50S ribosomal subunit.

The sequence is that of Large ribosomal subunit protein uL30 from Methanothrix thermoacetophila (strain DSM 6194 / JCM 14653 / NBRC 101360 / PT) (Methanosaeta thermophila).